The chain runs to 321 residues: uncharacterized protein (321 aa).

The HTH lacI-type domain maps to 1-56; the sequence is MANIKDIAEKAGVSVTTVSRVINNHPYVSEDKRKRVFEAMESLEYTRNIHAVHLSK. The H-T-H motif DNA-binding region spans 4–23; the sequence is IKDIAEKAGVSVTTVSRVIN.

This is an uncharacterized protein from Bacillus subtilis (strain 168).